We begin with the raw amino-acid sequence, 354 residues long: G-protein coupled estrogen receptor 1 (354 aa).

Over 1–40 the chain is Extracellular; that stretch reads MEEQTTSLVWIYVNSTEQLNTSYEYNTTYLIEDSDKYQSY. Residues 41–61 form a helical membrane-spanning segment; sequence VIGLFLSCLYTILLFPIGFIG. The Cytoplasmic segment spans residues 62 to 81; the sequence is NILILVVNLNHRGKMAIPDL. The chain crosses the membrane as a helical span at residues 82 to 102; it reads YFVNLAVADLILVADSLIEVF. Topologically, residues 103–112 are extracellular; that stretch reads NLNEKYYDYA. A helical membrane pass occupies residues 113–133; sequence VLCTFMSLFLQVNMYSSIFFL. An intrachain disulfide couples Cys115 to Cys192. At 134 to 160 the chain is on the cytoplasmic side; that stretch reads TWMSFDRYIALANSMSSSPLRTMQHAK. Residues 161-181 form a helical membrane-spanning segment; sequence LSCGLIWMASILATLLPFTIV. Topologically, residues 182–202 are extracellular; it reads QTQHRGEVHFCFANVFEIQWL. A helical membrane pass occupies residues 203–223; it reads EVTIGFLVPFSIIGLCYSLIG. The Cytoplasmic segment spans residues 224–245; that stretch reads RILMRSQKHRGLWPRRQKALRM. Residues 246-266 traverse the membrane as a helical segment; sequence IVVVVLVFFICWLPENVFISI. Over 267 to 292 the chain is Extracellular; that stretch reads QLLQGTADPSQRTATTLRHDYPLTGH. The helical transmembrane segment at 293–313 threads the bilayer; it reads IVNLAAFSNSCLNPIIYSFLG. Over 314-353 the chain is Cytoplasmic; that stretch reads ETFRDKLRLFIKQKASWSVVNRFCHHGLDLHLPVRSEVSE.

The protein belongs to the G-protein coupled receptor 1 family. In terms of assembly, homodimer. Heterodimer. As to expression, expressed in oocytes (at protein level). Highly expressed in brain, heart, testis and ovary. Weakly expressed in muscle and intestine.

The protein resides in the nucleus. The protein localises to the cytoplasm. It localises to the perinuclear region. It is found in the cytoskeleton. Its subcellular location is the cytoplasmic vesicle membrane. The protein resides in the cell membrane. The protein localises to the basolateral cell membrane. It localises to the endoplasmic reticulum membrane. It is found in the early endosome. Its subcellular location is the recycling endosome. The protein resides in the golgi apparatus. The protein localises to the trans-Golgi network. It localises to the golgi apparatus membrane. It is found in the cell projection. Its subcellular location is the dendrite. The protein resides in the dendritic spine membrane. The protein localises to the axon. It localises to the postsynaptic density. It is found in the mitochondrion membrane. In terms of biological role, membrane G-protein coupled estrogen receptor that binds to 17-beta-estradiol (E2) with high affinity, leading to rapid and transient activation of numerous intracellular signaling pathways. Plays a role in the embryonic development of sensory and motor neurons. May induce apoptosis and reduce proliferation of brain cells. Involved in maintenance of meiotic arrest in oocytes. In Micropogonias undulatus (Atlantic croaker), this protein is G-protein coupled estrogen receptor 1 (gper1).